A 146-amino-acid chain; its full sequence is Oleosin (146 aa).

Position 2 is an N-acetylalanine (A2). Helical transmembrane passes span 22 to 42, 56 to 76, and 77 to 97; these read ILGF…TGLT, VLIF…VAVA, and GFLS…WLYN. The Proline-knot motif lies at 55–66; the sequence is PVLIFFSPILIP.

The protein belongs to the oleosin family. Expressed in pollen (at protein level).

The protein resides in the lipid droplet. Its subcellular location is the membrane. The sequence is that of Oleosin from Pinus elliottii (Slash pine).